Consider the following 285-residue polypeptide: Shikimate dehydrogenase (NADP(+)) (285 aa).

Shikimate is bound by residues 22–24 (SMS) and threonine 69. Catalysis depends on lysine 73, which acts as the Proton acceptor. Position 85 (aspartate 85) interacts with NADP(+). Shikimate is bound by residues asparagine 94 and aspartate 110. NADP(+) contacts are provided by residues 136–140 (GAGGA), 160–165 (NRTVAR), and methionine 225. Position 227 (tyrosine 227) interacts with shikimate. Glycine 248 contributes to the NADP(+) binding site.

This sequence belongs to the shikimate dehydrogenase family. As to quaternary structure, homodimer.

It carries out the reaction shikimate + NADP(+) = 3-dehydroshikimate + NADPH + H(+). It participates in metabolic intermediate biosynthesis; chorismate biosynthesis; chorismate from D-erythrose 4-phosphate and phosphoenolpyruvate: step 4/7. Functionally, involved in the biosynthesis of the chorismate, which leads to the biosynthesis of aromatic amino acids. Catalyzes the reversible NADPH linked reduction of 3-dehydroshikimate (DHSA) to yield shikimate (SA). The polypeptide is Shikimate dehydrogenase (NADP(+)) (Caulobacter vibrioides (strain ATCC 19089 / CIP 103742 / CB 15) (Caulobacter crescentus)).